A 283-amino-acid chain; its full sequence is Urease accessory protein UreD 1 (283 aa).

This sequence belongs to the UreD family. UreD, UreF and UreG form a complex that acts as a GTP-hydrolysis-dependent molecular chaperone, activating the urease apoprotein by helping to assemble the nickel containing metallocenter of UreC. The UreE protein probably delivers the nickel.

It localises to the cytoplasm. In terms of biological role, required for maturation of urease via the functional incorporation of the urease nickel metallocenter. This is Urease accessory protein UreD 1 from Brucella anthropi (strain ATCC 49188 / DSM 6882 / CCUG 24695 / JCM 21032 / LMG 3331 / NBRC 15819 / NCTC 12168 / Alc 37) (Ochrobactrum anthropi).